Consider the following 410-residue polypeptide: Arginine biosynthesis bifunctional protein ArgJ (410 aa).

Residues threonine 158, lysine 184, threonine 195, glutamate 282, asparagine 405, and serine 410 each coordinate substrate. Threonine 195 (nucleophile) is an active-site residue.

It belongs to the ArgJ family. In terms of assembly, heterotetramer of two alpha and two beta chains.

The protein resides in the cytoplasm. It catalyses the reaction N(2)-acetyl-L-ornithine + L-glutamate = N-acetyl-L-glutamate + L-ornithine. It carries out the reaction L-glutamate + acetyl-CoA = N-acetyl-L-glutamate + CoA + H(+). It participates in amino-acid biosynthesis; L-arginine biosynthesis; L-ornithine and N-acetyl-L-glutamate from L-glutamate and N(2)-acetyl-L-ornithine (cyclic): step 1/1. It functions in the pathway amino-acid biosynthesis; L-arginine biosynthesis; N(2)-acetyl-L-ornithine from L-glutamate: step 1/4. Catalyzes two activities which are involved in the cyclic version of arginine biosynthesis: the synthesis of N-acetylglutamate from glutamate and acetyl-CoA as the acetyl donor, and of ornithine by transacetylation between N(2)-acetylornithine and glutamate. The polypeptide is Arginine biosynthesis bifunctional protein ArgJ (Bartonella henselae (strain ATCC 49882 / DSM 28221 / CCUG 30454 / Houston 1) (Rochalimaea henselae)).